The primary structure comprises 457 residues: UDP-N-acetylmuramate--L-alanine ligase (457 aa).

Position 112 to 118 (112 to 118 (GAHGKTS)) interacts with ATP.

Belongs to the MurCDEF family.

Its subcellular location is the cytoplasm. It catalyses the reaction UDP-N-acetyl-alpha-D-muramate + L-alanine + ATP = UDP-N-acetyl-alpha-D-muramoyl-L-alanine + ADP + phosphate + H(+). It functions in the pathway cell wall biogenesis; peptidoglycan biosynthesis. Its function is as follows. Cell wall formation. In Desulfosudis oleivorans (strain DSM 6200 / JCM 39069 / Hxd3) (Desulfococcus oleovorans), this protein is UDP-N-acetylmuramate--L-alanine ligase.